The chain runs to 599 residues: Beta-(1--&gt;2)glucan export ATP-binding/permease protein NdvA (599 aa).

Residues 21–311 form the ABC transmembrane type-1 domain; it reads GWILAVANLL…VVNFINNVLM (291 aa). Transmembrane regions (helical) follow at residues 22–42, 68–88, 146–166, 168–188, 254–274, and 276–296; these read WILAVANLLLATAQFAEPILF, LLGAWVGFGLFTIMCSALVAL, EHFAAILSLVVLLPLSLYINW, LAILLFVLCIVFTVLTTLVVH, VITRASTTITVLSIFALGIYL, and QQGLTSVGEIVMFVSFATLLI. An ABC transporter domain is found at 345–579; sequence VEFQNVSFSY…GGAFAQLARA (235 aa). 378–385 is an ATP binding site; it reads GATGAGKS.

The protein belongs to the ABC transporter superfamily. Beta-(1--&gt;2)glucan exporter (TC 3.A.1.108.1) family. In terms of assembly, homodimer.

It localises to the cell inner membrane. It catalyses the reaction [(1-&gt;2)-beta-D-glucosyl](n)(in) + ATP + H2O = [(1-&gt;2)-beta-D-glucosyl](n)(out) + ADP + phosphate + H(+). Functionally, involved in beta-(1--&gt;2)glucan export. Transmembrane domains (TMD) form a pore in the inner membrane and the ATP-binding domain (NBD) is responsible for energy generation. In Rhodopseudomonas palustris (strain ATCC BAA-98 / CGA009), this protein is Beta-(1--&gt;2)glucan export ATP-binding/permease protein NdvA.